Consider the following 269-residue polypeptide: ATP synthase subunit delta (269 aa).

Belongs to the ATPase delta chain family. In terms of assembly, F-type ATPases have 2 components, F(1) - the catalytic core - and F(0) - the membrane proton channel. F(1) has five subunits: alpha(3), beta(3), gamma(1), delta(1), epsilon(1). F(0) has three main subunits: a(1), b(2) and c(10-14). The alpha and beta chains form an alternating ring which encloses part of the gamma chain. F(1) is attached to F(0) by a central stalk formed by the gamma and epsilon chains, while a peripheral stalk is formed by the delta and b chains.

Its subcellular location is the cell membrane. Functionally, f(1)F(0) ATP synthase produces ATP from ADP in the presence of a proton or sodium gradient. F-type ATPases consist of two structural domains, F(1) containing the extramembraneous catalytic core and F(0) containing the membrane proton channel, linked together by a central stalk and a peripheral stalk. During catalysis, ATP synthesis in the catalytic domain of F(1) is coupled via a rotary mechanism of the central stalk subunits to proton translocation. In terms of biological role, this protein is part of the stalk that links CF(0) to CF(1). It either transmits conformational changes from CF(0) to CF(1) or is implicated in proton conduction. This chain is ATP synthase subunit delta, found in Nocardia farcinica (strain IFM 10152).